Reading from the N-terminus, the 211-residue chain is Arginine exporter protein ArgO (211 aa).

6 helical membrane passes run 1–21 (MFTY…PLGP), 37–57 (LMIA…GIFG), 68–88 (LLAL…FGAL), 111–131 (IIIT…DTFV), 147–167 (WFAL…ALLA), and 179–199 (AQRI…FQLA).

This sequence belongs to the LysE/ArgO transporter (TC 2.A.75) family.

The protein localises to the cell inner membrane. It catalyses the reaction L-arginine(in) = L-arginine(out). Functionally, involved in the export of arginine. Important to control the intracellular level of arginine and the correct balance between arginine and lysine. This Klebsiella pneumoniae subsp. pneumoniae (strain ATCC 700721 / MGH 78578) protein is Arginine exporter protein ArgO.